Here is a 206-residue protein sequence, read N- to C-terminus: Proteasome subunit beta 1 (206 aa).

The propeptide at methionine 1–glycine 14 is removed in mature form; by autocatalysis. Residue threonine 15 is the Nucleophile of the active site.

It belongs to the peptidase T1B family. The 20S proteasome core is composed of 14 alpha and 14 beta subunits that assemble into four stacked heptameric rings, resulting in a barrel-shaped structure. The two inner rings, each composed of seven catalytic beta subunits, are sandwiched by two outer rings, each composed of seven alpha subunits. The catalytic chamber with the active sites is on the inside of the barrel. Has a gated structure, the ends of the cylinder being occluded by the N-termini of the alpha-subunits. Is capped at one or both ends by the proteasome regulatory ATPase, PAN.

It localises to the cytoplasm. It carries out the reaction Cleavage of peptide bonds with very broad specificity.. Its activity is regulated as follows. The formation of the proteasomal ATPase PAN-20S proteasome complex, via the docking of the C-termini of PAN into the intersubunit pockets in the alpha-rings, triggers opening of the gate for substrate entry. Interconversion between the open-gate and close-gate conformations leads to a dynamic regulation of the 20S proteasome proteolysis activity. Its function is as follows. Component of the proteasome core, a large protease complex with broad specificity involved in protein degradation. The protein is Proteasome subunit beta 1 of Caldivirga maquilingensis (strain ATCC 700844 / DSM 13496 / JCM 10307 / IC-167).